A 574-amino-acid polypeptide reads, in one-letter code: Mitochondrial distribution and morphology protein 34 (574 aa).

Positions 1–195 (MAFNFNWSPL…LPAIIHRLSL (195 aa)) constitute an SMP-LTD domain. Disordered stretches follow at residues 210-233 (RESP…KDPV), 301-403 (EGAA…TPPT), and 479-515 (SADG…ESNA). Composition is skewed to low complexity over residues 212-224 (SPAA…GEDP), 302-314 (GAAS…GSPV), and 323-334 (SSPLSSLQDASS). Polar residues predominate over residues 335–345 (VLSLQNRSTTP). A compositionally biased stretch (low complexity) spans 346-359 (GSSFSGYGLSLGAG). Basic residues predominate over residues 360–373 (RHSKTRPTRKRKKR). Basic and acidic residues predominate over residues 374–385 (VVDLRKHNKPAD). The span at 393–403 (STFTESTTPPT) shows a compositional bias: low complexity. Over residues 484–493 (KTSSQQQPIS) the composition is skewed to polar residues.

The protein belongs to the MDM34 family. As to quaternary structure, component of the ER-mitochondria encounter structure (ERMES) or MDM complex, composed of MMM1, MDM10, MDM12 and MDM34.

It localises to the mitochondrion outer membrane. Its function is as follows. Component of the ERMES/MDM complex, which serves as a molecular tether to connect the endoplasmic reticulum (ER) and mitochondria. Components of this complex are involved in the control of mitochondrial shape and protein biogenesis, and function in nonvesicular lipid trafficking between the ER and mitochondria. MDM34 is required for the interaction of the ER-resident membrane protein MMM1 and the outer mitochondrial membrane-resident beta-barrel protein MDM10. The chain is Mitochondrial distribution and morphology protein 34 from Coccidioides immitis (strain RS) (Valley fever fungus).